We begin with the raw amino-acid sequence, 320 residues long: MQPSALLLLGPTASGKTASALALARVLPIEIVSVDSALVYRDMDIGTAKPTAAERAACPHHLVDIVSPEESYSAAHFRRDALRLIGEIHARGRIPLLAGGTMLYFKALRDGLSDLPAADADLRADIDAAAARLGWPALHAQLAQIDPDAAARLDSADAQRIQRALEIVRLTGRPLAESYARREAAALPFRMLPIALVPSDRAVLHARIEQRFDQMLAAGLIDELRALRARYTLDATLPSMRCVGYRQVWEYLDGGDDYDTMRFKGIAATRQLAKRQLTWQRQFRDSWPGLVELDCLRPDLTNAVNTAAARLLTRSRHAAH.

10–17 (GPTASGKT) is an ATP binding site. 12-17 (TASGKT) lines the substrate pocket. Interaction with substrate tRNA regions lie at residues 35–38 (DSAL), 159–163 (QRIQR), and 241–246 (RCVGYR).

Belongs to the IPP transferase family. As to quaternary structure, monomer. Mg(2+) is required as a cofactor.

The catalysed reaction is adenosine(37) in tRNA + dimethylallyl diphosphate = N(6)-dimethylallyladenosine(37) in tRNA + diphosphate. Catalyzes the transfer of a dimethylallyl group onto the adenine at position 37 in tRNAs that read codons beginning with uridine, leading to the formation of N6-(dimethylallyl)adenosine (i(6)A). This chain is tRNA dimethylallyltransferase, found in Aromatoleum aromaticum (strain DSM 19018 / LMG 30748 / EbN1) (Azoarcus sp. (strain EbN1)).